A 582-amino-acid polypeptide reads, in one-letter code: Semenogelin-2 (582 aa).

An N-terminal signal peptide occupies residues 1-23; sequence MKSIILFVLSLLLILEKQAAVMG. Disordered stretches follow at residues 25–62, 91–190, and 272–553; these read KGGS…SKGS, HKTT…QGGS, and NLNQ…FSGA. The span at 50–59 shows a compositional bias: basic and acidic residues; it reads GQKDKQHTES. Positions 92-134 are enriched in basic residues; sequence KTTKSKQHLRRHQRLLNYKQKGRGRVKPKRHFHLIVIHRKGGQ. Composition is skewed to polar residues over residues 137-161 and 174-190; these read HGTQ…QYSN and EQAS…QGGS. Residues 293–305 are compositionally biased toward basic and acidic residues; it reads TEERQPNHEEKSV. Positions 325-335 are enriched in polar residues; that stretch reads KSQNQVTIPSQ. A compositionally biased stretch (basic and acidic residues) spans 336-345; the sequence is DQEHGHKENK. A compositionally biased stretch (polar residues) spans 385–395; the sequence is KSQNQVAIPSQ. Positions 396-405 are enriched in basic and acidic residues; the sequence is DQEHGHKENK. Positions 445-455 are enriched in polar residues; that stretch reads KSQNQVTIPSQ. Positions 456–465 are enriched in basic and acidic residues; the sequence is DQEHGHKENK. Composition is skewed to polar residues over residues 487–498 and 506–529; these read KDVSQSSLSFQT and SQIQ…NSGK. The segment covering 530–546 has biased composition (basic and acidic residues); sequence SADRKQDLLSHEQEGRY.

The protein belongs to the semenogelin family. In terms of assembly, interacts with SERPINA5.

Its subcellular location is the secreted. In terms of biological role, participates in the formation of a gel matrix (sperm coagulum) entrapping the accessory gland secretions and ejaculated spermatozoa. In Macaca fascicularis (Crab-eating macaque), this protein is Semenogelin-2 (SEMG2).